Reading from the N-terminus, the 147-residue chain is Large ribosomal subunit protein uL11 (147 aa).

This sequence belongs to the universal ribosomal protein uL11 family. In terms of assembly, part of the ribosomal stalk of the 50S ribosomal subunit. Interacts with L10 and the large rRNA to form the base of the stalk. L10 forms an elongated spine to which L12 dimers bind in a sequential fashion forming a multimeric L10(L12)X complex. One or more lysine residues are methylated.

Functionally, forms part of the ribosomal stalk which helps the ribosome interact with GTP-bound translation factors. The chain is Large ribosomal subunit protein uL11 from Bacteroides fragilis (strain ATCC 25285 / DSM 2151 / CCUG 4856 / JCM 11019 / LMG 10263 / NCTC 9343 / Onslow / VPI 2553 / EN-2).